The primary structure comprises 147 residues: UPF0735 ACT domain-containing protein Cthe_1377 (147 aa).

The ACT domain maps to 71-146 (TLFFTVEDYA…GVKRQEILAR (76 aa)).

It belongs to the UPF0735 family.

The sequence is that of UPF0735 ACT domain-containing protein Cthe_1377 from Acetivibrio thermocellus (strain ATCC 27405 / DSM 1237 / JCM 9322 / NBRC 103400 / NCIMB 10682 / NRRL B-4536 / VPI 7372) (Clostridium thermocellum).